We begin with the raw amino-acid sequence, 464 residues long: Asparagine--tRNA ligase (464 aa).

It belongs to the class-II aminoacyl-tRNA synthetase family. In terms of assembly, homodimer.

The protein resides in the cytoplasm. It catalyses the reaction tRNA(Asn) + L-asparagine + ATP = L-asparaginyl-tRNA(Asn) + AMP + diphosphate + H(+). The polypeptide is Asparagine--tRNA ligase (Clostridium botulinum (strain Eklund 17B / Type B)).